The following is a 2111-amino-acid chain: Fatty acid synthase beta subunit aflB (2111 aa).

The acetyltransferase (AT) domain stretch occupies residues 200–565 (IVTVFNGQGV…KAGTAARVIL (366 aa)). Residues 618–863 (SRALGLPPVM…AIVDTPGVPD (246 aa)) form an enoyl reductase (ER) domain region. The dehydratase (DH) domain stretch occupies residues 1195–1688 (GTKPSWRKAL…SPGETLLVDI (494 aa)). The 103-residue stretch at 1606–1708 (EMPTSSDQYA…IVVATARSES (103 aa)) folds into the MaoC-like domain. The malonyl/palmitoyl transferase (MT/PT) domain stretch occupies residues 1727–2091 (YLFTGQGSQK…FENVLAISES (365 aa)).

Belongs to the fungal fatty acid synthetase subunit beta family. [Alpha(6)beta(6)] hexamers of two multifunctional subunits (alpha and beta).

The enzyme catalyses acetyl-CoA + n malonyl-CoA + 2n NADPH + 4n H(+) = a long-chain-acyl-CoA + n CoA + n CO2 + 2n NADP(+).. The catalysed reaction is holo-[ACP] + acetyl-CoA = acetyl-[ACP] + CoA. It carries out the reaction holo-[ACP] + malonyl-CoA = malonyl-[ACP] + CoA. It catalyses the reaction a (3R)-hydroxyacyl-[ACP] = a (2E)-enoyl-[ACP] + H2O. The enzyme catalyses a 2,3-saturated acyl-[ACP] + NAD(+) = a (2E)-enoyl-[ACP] + NADH + H(+). The catalysed reaction is (9Z)-octadecenoyl-[ACP] + H2O = (9Z)-octadecenoate + holo-[ACP] + H(+). Its pathway is secondary metabolite biosynthesis. Fatty acid synthase beta subunit; part of the gene cluster that mediates the biosynthesis of aspercryptins, linear lipopeptides built from six amino acids including 2 highly unusual and nonproteogenic amino acids, 2-amino-octanoic acid (2aoa) and 2-amino-dodecanol (2adol). The core structure of aspercryptins is as follows: Ser/Ala-Thr-Ile/Val-2aoa-Asn-2adol. The first step of aspercryptin biosynthesis is the generation of the fatty acid precursors, octanoic and dodecanoic acids, by the FAS subunits atnF and atnM. The fatty acid precursors are likely transformed into the corresponding alpha-amino fatty acids in three steps. First, they are hydroxylated by the cytochrome P450 monooxygenase atnE, then oxidized to the corresponding alpha-keto acids by the NAD(P)-dependent oxidoreductase atnD, and finally converted to the alpha-amino fatty acids by the PLP-dependent aminotransferases atnH or atnJ. the alpha-amino fatty acids, 2-amino-octanoic and 2-amino-dodecanoic acids, are recognized, activated, and covalently tethered to the NRPS atnA by its fourth and sixth adenylation domains. The second module of atnA is the Thr module and contains an epimerase (E) domain responsible for the epimerization of Thr to D-allo-Thr. Additionally, despite atnA having only one epimerase domain, the first amino acid of aspercryptin A1 is D-Ser, suggesting that serine is either loaded directly as D-Ser on the first module or that the epimerase domain in the threonine module epimerizes both L-Ser and L-Thr. After condensation of the hexapeptide of aspercryptin, the C-terminal reductase (TE) domain might be involved in the reductive release and production of the aldehyde hexapeptide. Further reduction would generate aspercryptins. The variety of aspercryptins produced reflects the flexibility of the atnA NRPS, allowing incorporation of alanine instead of serine, valine for isoleucine, and a C10 fatty amino alcohol instead of the C12 version. AtnB seems to be involved in the selectivity for Ile versus Val by the third module. Moreover, type B, C and D aspercryptins have an additional N-terminal cichorine, acetyl and propionyl group respectively. The sequence is that of Fatty acid synthase beta subunit aflB from Emericella nidulans (strain FGSC A4 / ATCC 38163 / CBS 112.46 / NRRL 194 / M139) (Aspergillus nidulans).